The chain runs to 164 residues: uncharacterized protein (164 aa).

This is an uncharacterized protein from Rickettsia bellii (strain RML369-C).